We begin with the raw amino-acid sequence, 64 residues long: Large ribosomal subunit protein bL35 (64 aa).

Belongs to the bacterial ribosomal protein bL35 family.

The polypeptide is Large ribosomal subunit protein bL35 (Chlorobium chlorochromatii (strain CaD3)).